Here is a 500-residue protein sequence, read N- to C-terminus: NAD(P)H-quinone oxidoreductase chain 4, chloroplastic (500 aa).

14 consecutive transmembrane segments (helical) span residues 4–24 (FPWL…MLFL), 35–55 (YTIC…CYNF), 87–107 (IGTI…AFPV), 113–130 (FFHF…GSFS), 134–154 (LLLF…LLSM), 167–187 (FILY…GISL), 211–231 (ILFY…IPLH), 242–262 (HYST…YGLV), 272–292 (AHSM…IYAA), 305–325 (IAYS…SITD), 330–350 (GAIL…FLAG), 386–406 (LALP…GIIT), 416–436 (ILII…LLSM), and 462–482 (LFLS…PDFV).

The protein belongs to the complex I subunit 4 family.

It is found in the plastid. The protein resides in the chloroplast thylakoid membrane. It carries out the reaction a plastoquinone + NADH + (n+1) H(+)(in) = a plastoquinol + NAD(+) + n H(+)(out). The enzyme catalyses a plastoquinone + NADPH + (n+1) H(+)(in) = a plastoquinol + NADP(+) + n H(+)(out). This is NAD(P)H-quinone oxidoreductase chain 4, chloroplastic from Arabis hirsuta (Hairy rock-cress).